The chain runs to 443 residues: Large ribosomal subunit protein mL50 (443 aa).

The interval 121–145 (QPTRADAPEKIRDPNYEPATSGAGL) is disordered. The span at 126 to 135 (DAPEKIRDPN) shows a compositional bias: basic and acidic residues.

It belongs to the mitochondrion-specific ribosomal protein mL50 family. Component of the mitochondrial large ribosomal subunit (mt-LSU). Mature N.crassa 74S mitochondrial ribosomes consist of a small (37S) and a large (54S) subunit. The 37S small subunit contains a 16S ribosomal RNA (16S mt-rRNA) and 32 different proteins. The 54S large subunit contains a 23S rRNA (23S mt-rRNA) and 42 different proteins.

The protein localises to the mitochondrion. Component of the mitochondrial ribosome (mitoribosome), a dedicated translation machinery responsible for the synthesis of mitochondrial genome-encoded proteins, including at least some of the essential transmembrane subunits of the mitochondrial respiratory chain. The mitoribosomes are attached to the mitochondrial inner membrane and translation products are cotranslationally integrated into the membrane. The sequence is that of Large ribosomal subunit protein mL50 (mrpl13) from Neurospora crassa (strain ATCC 24698 / 74-OR23-1A / CBS 708.71 / DSM 1257 / FGSC 987).